The following is a 461-amino-acid chain: Argininosuccinate lyase (461 aa).

This sequence belongs to the lyase 1 family. Argininosuccinate lyase subfamily.

The protein localises to the cytoplasm. The catalysed reaction is 2-(N(omega)-L-arginino)succinate = fumarate + L-arginine. It participates in amino-acid biosynthesis; L-arginine biosynthesis; L-arginine from L-ornithine and carbamoyl phosphate: step 3/3. In Chlorobium chlorochromatii (strain CaD3), this protein is Argininosuccinate lyase.